A 135-amino-acid chain; its full sequence is Photosystem II extrinsic protein V (135 aa).

The heme c site is built by C37, C40, H41, and H92.

This sequence belongs to the cytochrome c family. PsbV subfamily. In terms of assembly, PSII is composed of 1 copy each of membrane proteins PsbA, PsbB, PsbC, PsbD, PsbE, PsbF, PsbH, PsbI, PsbJ, PsbK, PsbL, PsbM, PsbT, PsbX, PsbY, PsbZ, Psb30/Ycf12, peripheral proteins PsbO, CyanoQ (PsbQ), PsbU, PsbV and a large number of cofactors. It forms dimeric complexes. The cofactor is heme c.

The protein resides in the cellular thylakoid membrane. Functionally, one of the extrinsic, lumenal subunits of photosystem II (PSII). PSII is a light-driven water plastoquinone oxidoreductase, using light energy to abstract electrons from H(2)O, generating a proton gradient subsequently used for ATP formation. The extrinsic proteins stabilize the structure of photosystem II oxygen-evolving complex (OEC), the ion environment of oxygen evolution and protect the OEC against heat-induced inactivation. Low-potential cytochrome c that plays a role in the OEC of PSII. The sequence is that of Photosystem II extrinsic protein V from Microcystis aeruginosa.